A 437-amino-acid polypeptide reads, in one-letter code: 3-phosphoshikimate 1-carboxyvinyltransferase (437 aa).

3-phosphoshikimate contacts are provided by K22, S23, and R27. Residue K22 coordinates phosphoenolpyruvate. Phosphoenolpyruvate is bound by residues G94 and R122. 3-phosphoshikimate is bound by residues S167, Q169, D314, and K341. Q169 contacts phosphoenolpyruvate. D314 functions as the Proton acceptor in the catalytic mechanism. Residues R345 and R389 each coordinate phosphoenolpyruvate.

This sequence belongs to the EPSP synthase family. As to quaternary structure, monomer.

It is found in the cytoplasm. The enzyme catalyses 3-phosphoshikimate + phosphoenolpyruvate = 5-O-(1-carboxyvinyl)-3-phosphoshikimate + phosphate. The protein operates within metabolic intermediate biosynthesis; chorismate biosynthesis; chorismate from D-erythrose 4-phosphate and phosphoenolpyruvate: step 6/7. Catalyzes the transfer of the enolpyruvyl moiety of phosphoenolpyruvate (PEP) to the 5-hydroxyl of shikimate-3-phosphate (S3P) to produce enolpyruvyl shikimate-3-phosphate and inorganic phosphate. The chain is 3-phosphoshikimate 1-carboxyvinyltransferase from Oenococcus oeni (strain ATCC BAA-331 / PSU-1).